Reading from the N-terminus, the 44-residue chain is DNA-directed RNA polymerase subunit Rpo12 (44 aa).

3 residues coordinate Zn(2+): Cys-8, Cys-22, and Cys-25.

Belongs to the archaeal Rpo12/eukaryotic RPC10 RNA polymerase subunit family. Part of the RNA polymerase complex. It depends on Zn(2+) as a cofactor.

The protein localises to the cytoplasm. The enzyme catalyses RNA(n) + a ribonucleoside 5'-triphosphate = RNA(n+1) + diphosphate. Functionally, DNA-dependent RNA polymerase (RNAP) catalyzes the transcription of DNA into RNA using the four ribonucleoside triphosphates as substrates. The polypeptide is DNA-directed RNA polymerase subunit Rpo12 (Natronomonas pharaonis (strain ATCC 35678 / DSM 2160 / CIP 103997 / JCM 8858 / NBRC 14720 / NCIMB 2260 / Gabara) (Halobacterium pharaonis)).